A 738-amino-acid chain; its full sequence is Zinc finger protein 235 (738 aa).

One can recognise a KRAB domain in the interval 8–79 (VTFKDVAVAF…ELQTQRGKHS (72 aa)). The C2H2-type 1; degenerate zinc-finger motif lies at 263–285 (YQGNECEEAFNDSSSLELHKQVH). C2H2-type zinc fingers lie at residues 319 to 341 (YWCHECGKGFSQSSNLQTHQRVH), 347 to 369 (YTCHECGKSFNQSSHLYAHLPIH), 375 to 397 (YRCDSCGKGFSRSTDLNIHCRVH), 403 to 425 (YKCEVCGKGFTQRSHLQAHERIH), 431 to 453 (YKCGDCGKRFSCSSNLHTHQRVH), 459 to 481 (YKCDECGKCFSLSFNLHSHQRVH), 487 to 509 (YKCEECGKGFSSASSFQSHQRVH), 515 to 537 (FRCNVCGKGFSQSSYFQAHQRVH), 543 to 565 (YKCEVCGKRFNWSLNLHNHQRVH), 571 to 593 (YKCEECGKGFSQASNLQAHQSVH), 599 to 621 (FKCDACQKRFSQASHLQAHQRVH), 627 to 649 (YKCDTCGKAFSQRSNLQVHQIIH), 655 to 677 (FKCEECGKEFSWSAGLSAHQRVH), 683 to 705 (YTCQQCGKGFSQASHFHTHQRVH), and 711 to 733 (YICDVCCKGFSQRSHLIYHQRVH).

The protein belongs to the krueppel C2H2-type zinc-finger protein family.

The protein localises to the nucleus. May be involved in transcriptional regulation. The chain is Zinc finger protein 235 (ZNF235) from Homo sapiens (Human).